A 115-amino-acid polypeptide reads, in one-letter code: uncharacterized protein (115 aa).

Positions 1–29 are cleaved as a signal peptide; it reads MKKAMAILAVLAAAAVICGLLFFHNDVTD.

This is an uncharacterized protein from Bacillus subtilis (strain 168).